A 212-amino-acid polypeptide reads, in one-letter code: B3 domain-containing protein Os04g0386900 (212 aa).

Residues 1–78 (MRAATALPSI…PRPPEPEPEK (78 aa)) form a disordered region. Composition is skewed to low complexity over residues 8–23 (PSIPSSSSPSPMASDP) and 36–46 (DAGAEDPAAVD). Residues 93 to 191 (FTCIMCKSHV…EFRVQVLRAE (99 aa)) constitute a DNA-binding region (TF-B3).

The protein resides in the nucleus. The sequence is that of B3 domain-containing protein Os04g0386900 from Oryza sativa subsp. japonica (Rice).